A 161-amino-acid chain; its full sequence is Transcriptional repressor NrdR (161 aa).

A zinc finger lies at 3–34 (CPSCQHTDSRVLESRAADSGKSVRRRRECLNC). Positions 49–139 (ITVVKRSGTR…VYGKFSGISD (91 aa)) constitute an ATP-cone domain.

Belongs to the NrdR family. Zn(2+) is required as a cofactor.

Functionally, negatively regulates transcription of bacterial ribonucleotide reductase nrd genes and operons by binding to NrdR-boxes. The sequence is that of Transcriptional repressor NrdR from Synechococcus sp. (strain RCC307).